Reading from the N-terminus, the 109-residue chain is Phycoerythrin alpha-1 subunit (109 aa).

V6, A16, F17, P20, D27, A28, and A39 together coordinate (2R,3E)-phycocyanobilin.

It belongs to the phycoerythrin family. In terms of assembly, heterotetramer of 2 identical alpha chains and 2 identical beta chains which form 2 alpha-beta heterodimers within the heterotetramer. The two alpha-beta heterodimers are rotated to an open configuration in contrast to the closed configuration found in other cryptophyte species due to the insertion of a single amino acid, Asp-65, in a conserved region of the alpha chain. In the open form, the central chromophores are not in physical contact but are separated by a water-filled channel. In terms of processing, contains three phycocyanobilin chromophores with binding mediated by both the alpha and beta subunits.

The protein localises to the plastid. It localises to the chloroplast thylakoid membrane. In terms of biological role, light-harvesting photosynthetic tetrapyrrole chromophore-protein from the phycobiliprotein complex. The protein is Phycoerythrin alpha-1 subunit of Hemiselmis virescens.